A 350-amino-acid polypeptide reads, in one-letter code: Protein FAM118B (350 aa).

Position 2 is an N-acetylalanine (alanine 2). At serine 9 the chain carries Phosphoserine.

Belongs to the FAM118 family.

Its subcellular location is the nucleus. It is found in the cajal body. May play a role in Cajal bodies formation. This chain is Protein FAM118B (FAM118B), found in Macaca fascicularis (Crab-eating macaque).